A 423-amino-acid chain; its full sequence is MDIDQYMTDLGRRARHASRAMARASTAAKNAALDAVARAIERDAQVLKDANARDVARAREKGLDAAFVDRLTLSDKALNTMVEGLRQVASLADPIGEISNLKYRPSGIQVGQMRVPLGVIGIIYESRPNVTIDAAALCLKSGNATILRGGSEALESNTALAKLIGEGLEAAGLPQDAVQVVATADRAAVGKLITMTEYVDVIVPRGGKSLIERLINEARVPMIKHLDGICHVYVDDRADLAKALTVCDNAKTHRYGTCNTMETLLVSSGVAAKLLPPLGKLYRDKQVELRVDAAARTVLADAGVGPLVDATEEDWHTEYLAPVLAIKVVDGLDAAIEHINHYGSHHTDAIVTEDHDRAMRFLREVDSASVMVNASTRFADGFEFGLGAEIGISNDKLHARGPVGLEGLTSLKYVVLGHGEGRQ.

The protein belongs to the gamma-glutamyl phosphate reductase family.

Its subcellular location is the cytoplasm. It carries out the reaction L-glutamate 5-semialdehyde + phosphate + NADP(+) = L-glutamyl 5-phosphate + NADPH + H(+). The protein operates within amino-acid biosynthesis; L-proline biosynthesis; L-glutamate 5-semialdehyde from L-glutamate: step 2/2. In terms of biological role, catalyzes the NADPH-dependent reduction of L-glutamate 5-phosphate into L-glutamate 5-semialdehyde and phosphate. The product spontaneously undergoes cyclization to form 1-pyrroline-5-carboxylate. This is Gamma-glutamyl phosphate reductase from Burkholderia lata (strain ATCC 17760 / DSM 23089 / LMG 22485 / NCIMB 9086 / R18194 / 383).